The primary structure comprises 256 residues: 3-isopropylmalate dehydratase small subunit 2 (256 aa).

Residues 1 to 59 (MAYSLPTFPQALPCSSTKTSSSLATFRSPFLRFNGSTSLIPSSISITSRGTSSPTIIPR) constitute a chloroplast transit peptide.

This sequence belongs to the LeuD family. Heterodimer of the large LEUC/IIL1 subunit and the small LEUD (SSU1, SSU2 or SSU3) subunits. As to expression, expressed in vascular bundles of roots, cotyledons and rosette leaves. Expressed in stem vascular bundles which branche off into lateral inflorescences. Expressed in connective tissues in anthers. In young seedlings, expressed in cotyledon epidermal cells and vasculare bundles. In hypocotyls, expressed in parenchyma cells surrounding the vasculature and further peripheral cells. In seedling roots, expressed in cells along the vasculature. In roots of adult plants, expressed in cells closely associated with the stele. In flowering stalks, expressed in parenchyma cells associated with the phloem or the xylem. Expressed in the vasculature of sepals and petals.

The protein localises to the plastid. The protein resides in the chloroplast stroma. The enzyme catalyses (2R,3S)-3-isopropylmalate = (2S)-2-isopropylmalate. The catalysed reaction is a 2-(omega-methylsulfanyl)alkylmalate = a 2-(omega-methylsulfanyl)alkylmaleate + H2O. It catalyses the reaction 2-(3-methylsulfanyl)propylmalate = 2-(2-methylsulfanyl)propylmaleate + H2O. It carries out the reaction a 3-(omega-methylsulfanyl)alkylmalate = a 2-(omega-methylsulfanyl)alkylmaleate + H2O. The enzyme catalyses 2-(2-methylsulfanyl)ethylmalate = 2-(2-methylsulfanyl)ethylmaleate + H2O. The catalysed reaction is 3-(2-methylsulfanyl)ethylmalate = 2-(2-methylsulfanyl)ethylmaleate + H2O. It catalyses the reaction 3-(3-methylsulfanyl)propylmalate = 2-(2-methylsulfanyl)propylmaleate + H2O. The protein operates within amino-acid biosynthesis; L-leucine biosynthesis; L-leucine from 3-methyl-2-oxobutanoate: step 2/4. Its function is as follows. Catalyzes the isomerization between 2-isopropylmalate and 3-isopropylmalate, via the formation of 2-isopropylmaleate. Functions redundantly with LEUD2 in the methionine chain elongation pathway of aliphatic glucosinolate formation. In Arabidopsis thaliana (Mouse-ear cress), this protein is 3-isopropylmalate dehydratase small subunit 2.